The chain runs to 417 residues: uncharacterized protein (417 aa).

This sequence to M.tuberculosis Rv2067c.

This is an uncharacterized protein from Synechococcus sp. (strain ATCC 27144 / PCC 6301 / SAUG 1402/1) (Anacystis nidulans).